Here is a 273-residue protein sequence, read N- to C-terminus: NH(3)-dependent NAD(+) synthetase (273 aa).

45 to 52 (GISGGQDS) provides a ligand contact to ATP. Aspartate 51 is a Mg(2+) binding site. Arginine 139 serves as a coordination point for deamido-NAD(+). Threonine 159 lines the ATP pocket. Glutamate 164 serves as a coordination point for Mg(2+). 2 residues coordinate deamido-NAD(+): lysine 172 and aspartate 179. Positions 188 and 210 each coordinate ATP. Deamido-NAD(+) is bound at residue 259-260 (HK).

The protein belongs to the NAD synthetase family. Homodimer.

It catalyses the reaction deamido-NAD(+) + NH4(+) + ATP = AMP + diphosphate + NAD(+) + H(+). Its pathway is cofactor biosynthesis; NAD(+) biosynthesis; NAD(+) from deamido-NAD(+) (ammonia route): step 1/1. Catalyzes the ATP-dependent amidation of deamido-NAD to form NAD. Uses ammonia as a nitrogen source. The protein is NH(3)-dependent NAD(+) synthetase of Bacillus pumilus (strain SAFR-032).